Consider the following 570-residue polypeptide: Sulfite reductase [NADPH] hemoprotein beta-component (570 aa).

[4Fe-4S] cluster contacts are provided by Cys-434, Cys-440, Cys-479, and Cys-483. Cys-483 serves as a coordination point for siroheme.

Belongs to the nitrite and sulfite reductase 4Fe-4S domain family. In terms of assembly, alpha(8)-beta(8). The alpha component is a flavoprotein, the beta component is a hemoprotein. The cofactor is siroheme. Requires [4Fe-4S] cluster as cofactor.

The enzyme catalyses hydrogen sulfide + 3 NADP(+) + 3 H2O = sulfite + 3 NADPH + 4 H(+). It participates in sulfur metabolism; hydrogen sulfide biosynthesis; hydrogen sulfide from sulfite (NADPH route): step 1/1. Functionally, component of the sulfite reductase complex that catalyzes the 6-electron reduction of sulfite to sulfide. This is one of several activities required for the biosynthesis of L-cysteine from sulfate. The chain is Sulfite reductase [NADPH] hemoprotein beta-component from Escherichia coli (strain B / BL21-DE3).